Here is a 401-residue protein sequence, read N- to C-terminus: Chalcone synthase 4 (401 aa).

Residue cysteine 168 is part of the active site.

This sequence belongs to the thiolase-like superfamily. Chalcone/stilbene synthases family.

It catalyses the reaction (E)-4-coumaroyl-CoA + 3 malonyl-CoA + 3 H(+) = 2',4,4',6'-tetrahydroxychalcone + 3 CO2 + 4 CoA. It functions in the pathway secondary metabolite biosynthesis; flavonoid biosynthesis. In terms of biological role, the primary product of this enzyme is 4,2',4',6'-tetrahydroxychalcone (also termed naringenin-chalcone or chalcone) which can under specific conditions spontaneously isomerize into naringenin. The chain is Chalcone synthase 4 (CHS4) from Sorghum bicolor (Sorghum).